Reading from the N-terminus, the 50-residue chain is Bacteriocin BacSp222 (50 aa).

Methionine 1 carries the post-translational modification N-formylmethionine.

It localises to the secreted. Functionally, has bacteriolytic activity against Gram-positive bacteria B.subtilis, L.lactis and M.luteus and several species from genus Staphylococcus including methicillin-resistant S.aureus, with MIC values ranging from 0.11 uM to 7.8 uM. Has no activity against Gram-negative bacteria or fungi. In vitro, has a dose-dependent cytolytic effect on eukaryotic cells. The polypeptide is Bacteriocin BacSp222 (Staphylococcus pseudintermedius).